The primary structure comprises 513 residues: CUGBP Elav-like family member 2 (513 aa).

3 RRM domains span residues 35-118, 127-207, and 428-506; these read IKMF…PADS, RKLF…FADT, and ANLF…LKRS.

It belongs to the CELF/BRUNOL family.

The protein localises to the nucleus. It is found in the cytoplasm. Functionally, RNA-binding protein implicated in the regulation of several post-transcriptional events. May be involved in pre-mRNA alternative splicing, mRNA translation repression and stability. This is CUGBP Elav-like family member 2 (celf2) from Xenopus tropicalis (Western clawed frog).